The following is a 416-amino-acid chain: UDP-N-acetylglucosamine 1-carboxyvinyltransferase (416 aa).

Phosphoenolpyruvate is bound at residue Lys-22–Asn-23. Arg-92 lines the UDP-N-acetyl-alpha-D-glucosamine pocket. Cys-116 functions as the Proton donor in the catalytic mechanism. A 2-(S-cysteinyl)pyruvic acid O-phosphothioketal modification is found at Cys-116. UDP-N-acetyl-alpha-D-glucosamine-binding residues include Asp-304 and Ile-326.

The protein belongs to the EPSP synthase family. MurA subfamily.

Its subcellular location is the cytoplasm. It catalyses the reaction phosphoenolpyruvate + UDP-N-acetyl-alpha-D-glucosamine = UDP-N-acetyl-3-O-(1-carboxyvinyl)-alpha-D-glucosamine + phosphate. It functions in the pathway cell wall biogenesis; peptidoglycan biosynthesis. In terms of biological role, cell wall formation. Adds enolpyruvyl to UDP-N-acetylglucosamine. The polypeptide is UDP-N-acetylglucosamine 1-carboxyvinyltransferase (Solidesulfovibrio magneticus (strain ATCC 700980 / DSM 13731 / RS-1) (Desulfovibrio magneticus)).